We begin with the raw amino-acid sequence, 129 residues long: Fluoride-specific ion channel FluC 2 (129 aa).

4 helical membrane-spanning segments follow: residues leucine 9–leucine 29, glycine 37–isoleucine 57, methionine 74–phenylalanine 94, and tyrosine 100–isoleucine 120. Na(+)-binding residues include glycine 76 and threonine 79.

Belongs to the fluoride channel Fluc/FEX (TC 1.A.43) family.

Its subcellular location is the cell membrane. The enzyme catalyses fluoride(in) = fluoride(out). Its activity is regulated as follows. Na(+) is not transported, but it plays an essential structural role and its presence is essential for fluoride channel function. Fluoride-specific ion channel. Important for reducing fluoride concentration in the cell, thus reducing its toxicity. This chain is Fluoride-specific ion channel FluC 2, found in Ligilactobacillus salivarius (strain UCC118) (Lactobacillus salivarius).